We begin with the raw amino-acid sequence, 228 residues long: RNA pyrophosphohydrolase (228 aa).

A unknown region spans residues Met1–Ile70. Residues Val71 to Arg228 are rppH domain. The region spanning Gly76–Thr221 is the Nudix hydrolase domain. Residues Gly109–Gly130 carry the Nudix box motif.

It in the C-terminal section; belongs to the Nudix hydrolase family. RppH subfamily. A divalent metal cation is required as a cofactor.

Functionally, accelerates the degradation of transcripts by removing pyrophosphate from the 5'-end of triphosphorylated RNA, leading to a more labile monophosphorylated state that can stimulate subsequent ribonuclease cleavage. The sequence is that of RNA pyrophosphohydrolase from Coxiella burnetii (strain RSA 493 / Nine Mile phase I).